The primary structure comprises 1025 residues: Putative receptor-like protein kinase At3g47110 (1025 aa).

A signal peptide spans 1–30 (MGVPCIVMRLILVSALLVSVSLEHSDMVCA). Residues 31–653 (QTIRLTEETD…LPRRHSSVRK (623 aa)) are Extracellular-facing. N-linked (GlcNAc...) asparagine glycosylation is found at asparagine 63 and asparagine 103. LRR repeat units lie at residues 104-128 (LSFLRSLNLADNFFHGAIPSEVGNL), 130-151 (RLQYLNMSNNLFGGVIPVVLSN), 152-175 (CSSLSTLDLSSNHLEQGVPLEFGS), 176-200 (LSKLVLLSLGRNNLTGKFPASLGNL), 202-224 (SLQMLDFIYNQIEGEIPGDIARL), 226-248 (QMIFFRIALNKFNGVFPPPIYNL), 249-271 (SSLIFLSITGNSFSGTLRPDFGS), 273-297 (LPNLQILYMGINSFTGTIPETLSNI), 298-323 (SSLRQLDIPSNHLTGKIPLSFGRLQN), and 325-344 (LLLGLNNNSLGNYSSGDLDF). Asparagine 135 and asparagine 151 each carry an N-linked (GlcNAc...) asparagine glycan. Asparagine 188 and asparagine 199 each carry an N-linked (GlcNAc...) asparagine glycan. N-linked (GlcNAc...) asparagine glycosylation occurs at asparagine 247. The N-linked (GlcNAc...) asparagine glycan is linked to asparagine 296. 4 N-linked (GlcNAc...) asparagine glycosylation sites follow: asparagine 331, asparagine 336, asparagine 350, and asparagine 374. LRR repeat units lie at residues 351-374 (CSQLQYLNVGFNKLGGQLPVFIAN), 376-400 (STQLTELSLGGNLISGSIPHGIGNL), 401-424 (VSLQTLDLGENLLTGKLPPSLGEL), 426-448 (ELRKVLLYSNGLSGEIPSSLGNI), 449-472 (SGLTYLYLLNNSFEGSIPSSLGSC), 473-496 (SYLLDLNLGTNKLNGSIPHELMEL), 498-520 (SLVVLNVSFNLLVGPLRQDIGKL), 521-544 (KFLLALDVSYNKLSGQIPQTLANC), 546-567 (SLEFLLLQGNSFVGPIPDIRGL), 568-593 (TGLRFLDLSKNNLSGTIPEYMANFSK), and 595-616 (QNLNLSLNNFDGAVPTEGVFRN). N-linked (GlcNAc...) asparagine glycans are attached at residues asparagine 447, asparagine 458, asparagine 486, and asparagine 503. N-linked (GlcNAc...) asparagine glycans are attached at residues asparagine 579, asparagine 590, asparagine 598, and asparagine 616. The helical transmembrane segment at 654 to 674 (IITICVSAVMAALLLLCLCVV) threads the bilayer. The Cytoplasmic portion of the chain corresponds to 675–1025 (YLCWYKLRVK…RESFFRDEET (351 aa)). Threonine 716 carries the post-translational modification Phosphothreonine. A Protein kinase domain is found at 719 to 1020 (FSSSNLIGSG…KLVSIRESFF (302 aa)). Residues 725–733 (IGSGNFGAV) and lysine 748 each bind ATP. Phosphotyrosine is present on residues tyrosine 798 and tyrosine 843. Catalysis depends on aspartate 856, which acts as the Proton acceptor. Tyrosine 904 bears the Phosphotyrosine mark.

The protein belongs to the protein kinase superfamily. Ser/Thr protein kinase family.

The protein resides in the cell membrane. It carries out the reaction L-seryl-[protein] + ATP = O-phospho-L-seryl-[protein] + ADP + H(+). The enzyme catalyses L-threonyl-[protein] + ATP = O-phospho-L-threonyl-[protein] + ADP + H(+). In Arabidopsis thaliana (Mouse-ear cress), this protein is Putative receptor-like protein kinase At3g47110.